The primary structure comprises 279 residues: Elongation factor Ts (279 aa).

Residues 80–83 (TDFV) are involved in Mg(2+) ion dislocation from EF-Tu.

Belongs to the EF-Ts family.

Its subcellular location is the cytoplasm. Its function is as follows. Associates with the EF-Tu.GDP complex and induces the exchange of GDP to GTP. It remains bound to the aminoacyl-tRNA.EF-Tu.GTP complex up to the GTP hydrolysis stage on the ribosome. The sequence is that of Elongation factor Ts from Borreliella burgdorferi (strain ZS7) (Borrelia burgdorferi).